The primary structure comprises 453 residues: C4-dicarboxylate TRAP transporter large permease protein DctM (453 aa).

Transmembrane regions (helical) follow at residues alanine 2–isoleucine 22, alanine 50–methionine 70, phenylalanine 82–cysteine 102, methionine 104–isoleucine 124, glycine 139–valine 159, phenylalanine 172–isoleucine 192, alanine 217–threonine 237, alanine 243–phenylalanine 263, leucine 289–leucine 309, methionine 326–valine 346, leucine 356–isoleucine 376, isoleucine 380–phenylalanine 400, and alanine 417–valine 437.

Belongs to the TRAP transporter large permease family. As to quaternary structure, the complex comprises the extracytoplasmic solute receptor protein DctP, and the two transmembrane proteins DctQ and DctM.

Its subcellular location is the cell inner membrane. Part of the tripartite ATP-independent periplasmic (TRAP) transport system DctPQM involved in C4-dicarboxylates uptake. This chain is C4-dicarboxylate TRAP transporter large permease protein DctM, found in Vibrio cholerae serotype O1 (strain ATCC 39315 / El Tor Inaba N16961).